Here is a 312-residue protein sequence, read N- to C-terminus: Protein dif-1 (312 aa).

Solcar repeat units lie at residues 2-93 (SDVL…GKWL), 102-193 (MTFI…LKKK), and 203-289 (LSPG…TLAA). A run of 6 helical transmembrane segments spans residues 5–25 (LLNF…GHPF), 69–89 (MAAP…GCAV), 104–124 (FIQN…VMVP), 172–192 (TLLR…YLKK), 209–229 (LMAG…ADVL), and 261–282 (LFKG…CFFG).

Belongs to the mitochondrial carrier (TC 2.A.29) family.

The protein resides in the mitochondrion inner membrane. Its function is as follows. Seems to play a role in the maintenance of tissue differentiation in the developing embryo, but not for its initiation. This is Protein dif-1 (dif-1) from Caenorhabditis elegans.